The chain runs to 187 residues: Large ribosomal subunit protein uL13 (187 aa).

This sequence belongs to the universal ribosomal protein uL13 family.

The protein is Large ribosomal subunit protein uL13 (rpl13a) of Dictyostelium discoideum (Social amoeba).